Here is a 242-residue protein sequence, read N- to C-terminus: Small ribosomal subunit protein eS4 (242 aa).

An S4 RNA-binding domain is found at 43-106 (LPLMIIVRDI…GDVYRVLPDE (64 aa)).

This sequence belongs to the eukaryotic ribosomal protein eS4 family.

This chain is Small ribosomal subunit protein eS4 (rps4e), found in Methanothermobacter thermautotrophicus (strain ATCC 29096 / DSM 1053 / JCM 10044 / NBRC 100330 / Delta H) (Methanobacterium thermoautotrophicum).